The chain runs to 182 residues: Adenine phosphoribosyltransferase (182 aa).

This sequence belongs to the purine/pyrimidine phosphoribosyltransferase family. In terms of assembly, homodimer.

Its subcellular location is the cytoplasm. The catalysed reaction is AMP + diphosphate = 5-phospho-alpha-D-ribose 1-diphosphate + adenine. It participates in purine metabolism; AMP biosynthesis via salvage pathway; AMP from adenine: step 1/1. Catalyzes a salvage reaction resulting in the formation of AMP, that is energically less costly than de novo synthesis. The polypeptide is Adenine phosphoribosyltransferase (Campylobacter concisus (strain 13826)).